The primary structure comprises 1083 residues: Kinesin-like protein KIN-14R (1083 aa).

Residues 264-418 (HDKYEKKIAE…NHIQETKGNI (155 aa)) adopt a coiled-coil conformation. The Kinesin motor domain maps to 417 to 739 (NIRVFCRCRP…LNFATRVRGV (323 aa)). Position 500-507 (500-507 (GQTGTGKT)) interacts with ATP. Coiled coils occupy residues 746–876 (KQVD…SEGS) and 905–947 (IKEL…MATT). The interval 967–1083 (EDNFGNENME…RDSKKKIWSR (117 aa)) is disordered. Over residues 971-985 (GNENMESNTNILRTS) the composition is skewed to polar residues. Residues 1020–1032 (PQMKEKRIRKSDP) show a composition bias toward basic and acidic residues. The segment covering 1044–1054 (RTASGSSSQVP) has biased composition (polar residues). Residues 1062-1083 (KREQQEVPVVKERDSKKKIWSR) show a composition bias toward basic and acidic residues.

The protein belongs to the TRAFAC class myosin-kinesin ATPase superfamily. Kinesin family. KIN-14 subfamily.

The polypeptide is Kinesin-like protein KIN-14R (Arabidopsis thaliana (Mouse-ear cress)).